The following is a 95-amino-acid chain: UPF0045 protein CPE1503 (95 aa).

It belongs to the UPF0045 family.

The chain is UPF0045 protein CPE1503 from Clostridium perfringens (strain 13 / Type A).